The chain runs to 524 residues: Protein tweety homolog 3 (524 aa).

At Met1–Ala42 the chain is on the extracellular side. The chain crosses the membrane as a helical span at residues Leu43–Phe63. At Tyr64–Thr86 the chain is on the cytoplasmic side. Residues Ala87–Gly107 traverse the membrane as a helical segment. Topologically, residues Asn108 to Leu211 are extracellular. Residues Glu110 and Asp113 each contribute to the Ca(2+) site. Residues Asn126 and Asn144 are each glycosylated (N-linked (GlcNAc...) asparagine). A helical transmembrane segment spans residues Gly212–Ile232. At Arg233–Lys236 the chain is on the cytoplasmic side. Residues Gly237 to Leu257 form a helical membrane-spanning segment. Residues Gly258 to Glu386 are Extracellular-facing. Cystine bridges form between Cys271/Cys381 and Cys299/Cys366. Residue Asn351 is glycosylated (N-linked (GlcNAc...) asparagine). A helical membrane pass occupies residues Gly387–Cys407. The Cytoplasmic segment spans residues Ser408–His524. Disordered stretches follow at residues Trp413–His435 and Arg485–His524. Phosphoserine is present on Ser496. Positions Pro498 to Tyr501 match the PY-motif; mediates interaction with NEDD4L motif. Positions Tyr501–His524 are enriched in polar residues. A phosphoserine mark is found at Ser504 and Ser522.

This sequence belongs to the tweety family. As to quaternary structure, homotetramer; disulfide-linked. Forms cis-homodimers in the presence of Ca(2+). Interacts with NEDD4L. Post-translationally, ubiquitinated by NEDD4L. In terms of processing, N-glycosylated. Expressed in excitable tissues. Expressed in the brain, heart, skeletal muscle, colon, spleen, kidney and peripheral blood leukocytes. Also expressed in fat, the pancreas, thymus, and uterus.

Its subcellular location is the cell membrane. The catalysed reaction is chloride(in) = chloride(out). The enzyme catalyses L-glutamate(out) = L-glutamate(in). With respect to regulation, inhibited by (4-[(2-butyl-6,7-dichloro-2- cyclopentyl-2,3-dihydro-1-oxo-1H-inden-5-yl)oxy]butanoic acid), genistein and PD98059 (MEK1 inhibitor). In terms of biological role, calcium-independent, swelling-dependent volume-regulated anion channel (VRAC-swell) which plays a pivotal role in the process of regulatory volume decrease (RVD) in the brain through the efflux of anions like chloride and organic osmolytes like glutamate. Probable large-conductance Ca(2+)-activated chloride channel. The chain is Protein tweety homolog 3 (Ttyh3) from Mus musculus (Mouse).